Reading from the N-terminus, the 972-residue chain is Mast/stem cell growth factor receptor Kit (972 aa).

The signal sequence occupies residues 1-25 (MRGARGAWDFLCVLLLLLRVQTGSS). The Extracellular portion of the chain corresponds to 26 to 520 (QPSVSPEEAS…QIQPHTLFTP (495 aa)). Ig-like C2-type domains follow at residues 27–112 (PSVS…VFVR), 121–205 (DRSL…LKVR), 212–308 (PVVS…LEVV), 317–410 (PMIN…VYVN), and 413–507 (PEIL…FNFA). C58 and C97 are joined by a disulfide. 2 N-linked (GlcNAc...) asparagine glycosylation sites follow: N130 and N145. 3 disulfide bridges follow: C136-C186, C151-C183, and C233-C290. N-linked (GlcNAc...) asparagine glycosylation is found at N283, N300, N320, N352, N367, N463, and N486. C428 and C491 are oxidised to a cystine. The helical transmembrane segment at 521-541 (LLIGFVVVAGMMCIIVMILTY) threads the bilayer. Over 542 to 972 (KYLQKPMYEV…SQPLLVRDDV (431 aa)) the chain is Cytoplasmic. A phosphotyrosine mark is found at Y543 and Y549. Residue Y564 participates in Mg(2+) binding. Phosphotyrosine; by autocatalysis is present on residues Y564 and Y566. Positions 564-566 (YVY) are important for interaction with phosphotyrosine-binding proteins. Residues 585–933 (LSFGKTLGAG…ISESTNHIYS (349 aa)) enclose the Protein kinase domain. Residues 592–599 (GAGAFGKV), K619, and 667–673 (EYCCYGD) contribute to the ATP site. 2 positions are modified to phosphotyrosine; by autocatalysis: Y699 and Y717. The residue at position 726 (Y726) is a Phosphotyrosine. S737 and S742 each carry phosphoserine; by PKC/PRKCA. D788 functions as the Proton acceptor in the catalytic mechanism. R792 serves as a coordination point for ATP. Mg(2+) is bound by residues N793 and D806. Residue S817 is modified to Phosphoserine. Y819 is subject to Phosphotyrosine; by autocatalysis. A Phosphoserine modification is found at S887. Phosphotyrosine is present on Y896. Y932 is modified (phosphotyrosine; by autocatalysis). S955 bears the Phosphoserine mark.

Belongs to the protein kinase superfamily. Tyr protein kinase family. CSF-1/PDGF receptor subfamily. In terms of assembly, monomer in the absence of bound KITLG/SCF. Homodimer in the presence of bound KITLG/SCF, forming a heterotetramer with two KITLG/SCF molecules. Interacts (via phosphorylated tyrosine residues) with the adapter proteins GRB2 and GRB7 (via SH2 domain), and SH2B2/APS. Interacts (via C-terminus) with MPDZ (via the tenth PDZ domain). Interacts (via phosphorylated tyrosine residues) with PIK3R1 and PIK3CD. Interacts (via phosphorylated tyrosine) with CRK (isoform Crk-II), FYN, SHC1 and MATK/CHK (via SH2 domain). Interacts with LYN and FES/FPS. Interacts (via phosphorylated tyrosine residues) with the protein phosphatases PTPN6/SHP-1 (via SH2 domain), PTPN11/SHP-2 (via SH2 domain) and PTPRU. Interacts with PLCG1. Interacts with DOK1 and TEC. Interacts with IL1RAP (independent of stimulation with KITLG/SCF). A mast cell-specific KITLG/SCF-induced interleukin-33 signaling complex contains IL1RL1, IL1RAP, KIT and MYD88. Ubiquitinated by SOCS6. KIT is rapidly ubiquitinated after autophosphorylation induced by KITLG/SCF binding, leading to internalization and degradation. Post-translationally, autophosphorylated on tyrosine residues. KITLG/SCF binding promotes autophosphorylation. Phosphorylated tyrosine residues are important for interaction with specific binding partners.

It is found in the cell membrane. The catalysed reaction is L-tyrosyl-[protein] + ATP = O-phospho-L-tyrosyl-[protein] + ADP + H(+). With respect to regulation, present in an inactive conformation in the absence of bound ligand. KITLG/SCF binding leads to dimerization and activation by autophosphorylation on tyrosine residues. Activity is down-regulated by PRKCA-mediated phosphorylation on serine residues. Tyrosine-protein kinase that acts as a cell-surface receptor for the cytokine KITLG/SCF and plays an essential role in the regulation of cell survival and proliferation, hematopoiesis, stem cell maintenance, gametogenesis, mast cell development, migration and function, and in melanogenesis. In response to KITLG/SCF binding, KIT can activate several signaling pathways. Phosphorylates PIK3R1, PLCG1, SH2B2/APS and CBL. Activates the AKT1 signaling pathway by phosphorylation of PIK3R1, the regulatory subunit of phosphatidylinositol 3-kinase. Activated KIT also transmits signals via GRB2 and activation of RAS, RAF1 and the MAP kinases MAPK1/ERK2 and/or MAPK3/ERK1. Promotes activation of STAT family members STAT1, STAT3, STAT5A and STAT5B. Activation of PLCG1 leads to the production of the cellular signaling molecules diacylglycerol and inositol 1,4,5-trisphosphate. KIT signaling is modulated by protein phosphatases, and by rapid internalization and degradation of the receptor. Activated KIT promotes phosphorylation of the protein phosphatases PTPN6/SHP-1 and PTPRU, and of the transcription factors STAT1, STAT3, STAT5A and STAT5B. Promotes phosphorylation of PIK3R1, CBL, CRK (isoform Crk-II), LYN, MAPK1/ERK2 and/or MAPK3/ERK1, PLCG1, SRC and SHC1. The chain is Mast/stem cell growth factor receptor Kit (KIT) from Callithrix jacchus (White-tufted-ear marmoset).